A 338-amino-acid polypeptide reads, in one-letter code: Lipoate-protein ligase A (338 aa).

The BPL/LPL catalytic domain maps to Ser-29–Val-216. ATP is bound by residues Arg-71, Gly-76–Phe-79, and Lys-134. Position 134 (Lys-134) interacts with (R)-lipoate.

This sequence belongs to the LplA family. Monomer.

It is found in the cytoplasm. It catalyses the reaction L-lysyl-[lipoyl-carrier protein] + (R)-lipoate + ATP = N(6)-[(R)-lipoyl]-L-lysyl-[lipoyl-carrier protein] + AMP + diphosphate + H(+). It participates in protein modification; protein lipoylation via exogenous pathway; protein N(6)-(lipoyl)lysine from lipoate: step 1/2. It functions in the pathway protein modification; protein lipoylation via exogenous pathway; protein N(6)-(lipoyl)lysine from lipoate: step 2/2. Functionally, catalyzes both the ATP-dependent activation of exogenously supplied lipoate to lipoyl-AMP and the transfer of the activated lipoyl onto the lipoyl domains of lipoate-dependent enzymes. The chain is Lipoate-protein ligase A from Yersinia pseudotuberculosis serotype IB (strain PB1/+).